The sequence spans 368 residues: Proteinase-activated receptor 3 (368 aa).

The first 21 residues, 1–21 (MEMKVLILVGVRLLFLPTTVC), serve as a signal peptide directing secretion. The propeptide at 22–37 (QSGMKHVSDNSALTAE) is removed for receptor activation. At 38-93 (SFNGNEHSFEEFPLSDIEGWTGATTTIKAKCPEESITTLHVNNATMGYLRSSLSTK) the chain is on the extracellular side. N-linked (GlcNAc...) asparagine glycosylation is present at Asn-80. The chain crosses the membrane as a helical span at residues 94-114 (VIPAIYILVFVIGVPANIVTL). Residues 115–123 (WKLSSRTKS) lie on the Cytoplasmic side of the membrane. A helical transmembrane segment spans residues 124–144 (ICLVIFHTNLAIADLLFCVTL). The Extracellular portion of the chain corresponds to 145–166 (PFKIAYHLNGNDWVFGEVMCRV). Cysteines 164 and 243 form a disulfide. The helical transmembrane segment at 167 to 187 (TTVAFYGNMYCAILILTCMGI) threads the bilayer. Over 188-208 (NRYLATVHPFTYRKLPKRNFT) the chain is Cytoplasmic. A helical membrane pass occupies residues 209-229 (LLMCGVVWVMVVLYMLPLAIL). Over 230–257 (KQEYHLVQPGITTCHDVHDTCESPLPFQ) the chain is Extracellular. The chain crosses the membrane as a helical span at residues 258–278 (FYYFVSLAFFGFLIPFVVSVF). At 279 to 300 (CYTTLIHKLNAQDRKWLRYIKA) the chain is on the cytoplasmic side. A helical membrane pass occupies residues 301 to 321 (VLLILVIFTICFAPTNIILII). Topologically, residues 322 to 338 (HHANYYYSNTDSLYFMY) are extracellular. A helical transmembrane segment spans residues 339–359 (LIALCLGSLNSCLDPFLYFIM). Over 360-368 (SKIVDQLTS) the chain is Cytoplasmic.

This sequence belongs to the G-protein coupled receptor 1 family. As to quaternary structure, interacts with INSC/inscuteable and GPSM2. Post-translationally, a proteolytic cleavage generates a new N-terminus that functions as a tethered ligand.

The protein localises to the cell membrane. In terms of biological role, receptor for activated thrombin coupled to G proteins that stimulate phosphoinositide hydrolysis. The polypeptide is Proteinase-activated receptor 3 (F2rl2) (Rattus norvegicus (Rat)).